Here is a 71-residue protein sequence, read N- to C-terminus: Small ribosomal subunit protein bS21 (71 aa).

A disordered region spans residues 43-71; the sequence is TERKRAKASAVKRHAKKLARENARRTRLY. Over residues 46–59 the composition is skewed to basic residues; sequence KRAKASAVKRHAKK. Residues 60-71 show a composition bias toward basic and acidic residues; that stretch reads LARENARRTRLY.

This sequence belongs to the bacterial ribosomal protein bS21 family.

This Edwardsiella ictaluri (strain 93-146) protein is Small ribosomal subunit protein bS21.